We begin with the raw amino-acid sequence, 131 residues long: Fumarate reductase subunit C (131 aa).

A run of 3 helical transmembrane segments spans residues 30–50 (EGTA…LFAL), 57–77 (WAGF…LITL), and 109–129 (IIKS…FVAL).

Belongs to the FrdC family. In terms of assembly, part of an enzyme complex containing four subunits: a flavoprotein (FrdA), an iron-sulfur protein (FrdB), and two hydrophobic anchor proteins (FrdC and FrdD).

Its subcellular location is the cell inner membrane. Functionally, two distinct, membrane-bound, FAD-containing enzymes are responsible for the catalysis of fumarate and succinate interconversion; fumarate reductase is used in anaerobic growth, and succinate dehydrogenase is used in aerobic growth. Anchors the catalytic components of the fumarate reductase complex to the cell inner membrane, binds quinones. The protein is Fumarate reductase subunit C of Shigella flexneri.